Reading from the N-terminus, the 315-residue chain is Protein-L-isoaspartate O-methyltransferase (315 aa).

2 disordered regions span residues 1–47 (MSGE…KPAA) and 59–89 (RALP…AAPK). The span at 14 to 34 (EDLKRAPRKSEVRSGSGERHA) shows a compositional bias: basic and acidic residues. Low complexity-rich tracts occupy residues 35–47 (ASAV…KPAA) and 59–81 (RALP…LKPA). Ser162 is an active-site residue.

This sequence belongs to the methyltransferase superfamily. L-isoaspartyl/D-aspartyl protein methyltransferase family.

Its subcellular location is the cytoplasm. It catalyses the reaction [protein]-L-isoaspartate + S-adenosyl-L-methionine = [protein]-L-isoaspartate alpha-methyl ester + S-adenosyl-L-homocysteine. Functionally, catalyzes the methyl esterification of L-isoaspartyl residues in peptides and proteins that result from spontaneous decomposition of normal L-aspartyl and L-asparaginyl residues. It plays a role in the repair and/or degradation of damaged proteins. This chain is Protein-L-isoaspartate O-methyltransferase, found in Burkholderia ambifaria (strain MC40-6).